We begin with the raw amino-acid sequence, 945 residues long: Isoleucine--tRNA ligase (945 aa).

Residues 66–76 (PYANGDIHLGH) carry the 'HIGH' region motif. E581 contacts L-isoleucyl-5'-AMP. The 'KMSKS' region signature appears at 622–626 (KMSKS). Position 625 (K625) interacts with ATP. Zn(2+) contacts are provided by C908, C911, C928, and C931.

Belongs to the class-I aminoacyl-tRNA synthetase family. IleS type 1 subfamily. In terms of assembly, monomer. Zn(2+) is required as a cofactor.

Its subcellular location is the cytoplasm. The catalysed reaction is tRNA(Ile) + L-isoleucine + ATP = L-isoleucyl-tRNA(Ile) + AMP + diphosphate. Its function is as follows. Catalyzes the attachment of isoleucine to tRNA(Ile). As IleRS can inadvertently accommodate and process structurally similar amino acids such as valine, to avoid such errors it has two additional distinct tRNA(Ile)-dependent editing activities. One activity is designated as 'pretransfer' editing and involves the hydrolysis of activated Val-AMP. The other activity is designated 'posttransfer' editing and involves deacylation of mischarged Val-tRNA(Ile). This is Isoleucine--tRNA ligase from Burkholderia cenocepacia (strain HI2424).